Here is a 246-residue protein sequence, read N- to C-terminus: Ribonuclease 3 (246 aa).

In terms of domain architecture, RNase III spans 18–147; the sequence is FKELQKKIGI…FIGALYLDQG (130 aa). Glutamate 60 contributes to the Mg(2+) binding site. The active site involves aspartate 64. Mg(2+)-binding residues include aspartate 133 and glutamate 136. Residue glutamate 136 is part of the active site. The 70-residue stretch at 173-242 folds into the DRBM domain; the sequence is DFKSQLQELV…AQMALQKLKT (70 aa).

It belongs to the ribonuclease III family. In terms of assembly, homodimer. Mg(2+) is required as a cofactor.

It is found in the cytoplasm. The catalysed reaction is Endonucleolytic cleavage to 5'-phosphomonoester.. In terms of biological role, digests double-stranded RNA. Involved in the processing of primary rRNA transcript to yield the immediate precursors to the large and small rRNAs (23S and 16S). Processes some mRNAs, and tRNAs when they are encoded in the rRNA operon. Processes pre-crRNA and tracrRNA of type II CRISPR loci if present in the organism. The polypeptide is Ribonuclease 3 (Geobacillus sp. (strain WCH70)).